The primary structure comprises 377 residues: MGTTNGTDYGAYTYKELEREQYWPSENLKISITGAGGFIASHIARRLKHEGHYVIASDWKKNEHMTEDMFCDEFHLVDLRVMENCLKVTEGVDHVFNLAADMGGMGFIQSNHSVIMYNNTMISFNMIEAARINGIKRFFYASSACIYPEFKQLETTNVSLKESDAWPAEPQDAYGLEKLATEELCKHYNKDFGIECRIGRFHNIYGPFGTWKGGREKAPAAFCRKAQTSTDRFEMWGDGLQTRSFTFIDECVEGVLRLTKSDFREPVNIGSDEMVSMNEMAEMVLSFEEKKLPIHHIPGPEGVRGRNSDNNLIKEKLGWAPNMRLKEGLRITYFWIKEQIEKEKAKGSDVSLYGSSKVVGTQAPVQLGSLRAADGKE.

At Gly-2 the chain carries N-acetylglycine. Residues 34-60, Asp-58, and Asp-78 contribute to the NAD(+) site; that span reads GAGG…SDWK. Substrate contacts are provided by residues Gly-103 and 143–145; that span reads SAC. Residues Tyr-174 and Lys-178 each coordinate NAD(+). Tyr-174 functions as the Proton acceptor in the catalytic mechanism. Substrate-binding positions include Asn-203, 216–218, Lys-225, 241–243, Arg-306, and Ser-356; these read EKA and QTR. Phosphoserine is present on Ser-369.

This sequence belongs to the NAD(P)-dependent epimerase/dehydratase family. As to quaternary structure, homodimer. Interacts with chaperone Hsc70-3 protein, which may regulate epimerase activity. The cofactor is NAD(+).

It carries out the reaction GDP-alpha-D-mannose = GDP-beta-L-gulose. The enzyme catalyses GDP-beta-L-gulose = GDP-beta-L-galactose. It functions in the pathway cofactor biosynthesis; L-ascorbate biosynthesis via GDP-alpha-D-mannose pathway; L-ascorbate from GDP-alpha-D-mannose: step 1/5. Its activity is regulated as follows. Inhibited by GDP and GDP-D-glucose. Catalyzes a reversible epimerization of GDP-D-mannose that precedes the committed step in the biosynthesis of vitamin C (L-ascorbate), resulting in the hydrolysis of the highly energetic glycosyl-pyrophosphoryl linkage. Able to catalyze 2 distinct epimerization reactions and can release both GDP-L-galactose and GDP-L-gulose from GDP-mannose. This Arabidopsis thaliana (Mouse-ear cress) protein is GDP-mannose 3,5-epimerase.